Here is a 179-residue protein sequence, read N- to C-terminus: GTP-dependent dephospho-CoA kinase (179 aa).

GTP is bound by residues Asp49, Val50, Val51, Asp68, Lys70, and Glu126.

Belongs to the GTP-dependent DPCK family.

It carries out the reaction 3'-dephospho-CoA + GTP = GDP + CoA + H(+). The protein operates within cofactor biosynthesis; coenzyme A biosynthesis. In terms of biological role, catalyzes the GTP-dependent phosphorylation of the 3'-hydroxyl group of dephosphocoenzyme A to form coenzyme A (CoA). The chain is GTP-dependent dephospho-CoA kinase from Pyrococcus abyssi (strain GE5 / Orsay).